A 360-amino-acid chain; its full sequence is G-protein coupled receptor 183 (360 aa).

Residues 1-30 are Extracellular-facing; it reads MDIKMDNFTTPSAASLESDCDLYAHHHTAR. N-linked (GlcNAc...) asparagine glycosylation occurs at asparagine 7. A helical membrane pass occupies residues 31-56; the sequence is ILMPLHYSIVFIIGLVGNLLALIVII. At 57–76 the chain is on the cytoplasmic side; that stretch reads QNRKKINSTTLYSTNLVISD. A helical membrane pass occupies residues 77 to 94; sequence ILFTTALPTRIAYYALGF. Arginine 86 contacts 7alpha,25-dihydroxycholesterol. Residues 95 to 104 are Extracellular-facing; sequence DWRIGDALCR. Residues cysteine 103 and cysteine 180 are joined by a disulfide bond. Residues 105–126 form a helical membrane-spanning segment; it reads ITALVFYINTYAGVNFMTCLSI. 7alpha,25-dihydroxycholesterol-binding residues include tyrosine 111 and tyrosine 115. The interval 125-133 is interaction with G proteins; it reads SIDRFFAVV. Residues 127 to 148 are Cytoplasmic-facing; that stretch reads DRFFAVVHPLRYNKIKRIEHAK. The helical transmembrane segment at 149–167 threads the bilayer; it reads CICIFVWILVFGQTLPLLI. Residues 168–191 are Extracellular-facing; the sequence is NPMSKQEAERTTCMEYPNFEETKS. A helical transmembrane segment spans residues 192–214; sequence LPWILLGACFIGYVLPLVIILIC. At 215-240 the chain is on the cytoplasmic side; the sequence is YSQICCKLFKTAKQNPLTEKSGVNKK. The helical transmembrane segment at 241–264 threads the bilayer; that stretch reads ALNTIIFIIVVFVVCFTPYHVAII. Tyrosine 259 is a binding site for 7alpha,25-dihydroxycholesterol. Over 265-286 the chain is Extracellular; the sequence is QHMIKKLRLPGLLECSQRHSFQ. A helical transmembrane segment spans residues 287 to 311; that stretch reads ISLHFTVCLMNFNCCMDPFIYFFAC. The Cytoplasmic portion of the chain corresponds to 312 to 360; the sequence is KGYKRKVMKMLKRQVSVSISSAVRSAPEENSREMTETQMMIHSKSLNGK. Position 327 is a phosphoserine (serine 327). The segment at 339–360 is disordered; that stretch reads EENSREMTETQMMIHSKSLNGK. The span at 347–360 shows a compositional bias: polar residues; the sequence is ETQMMIHSKSLNGK.

Belongs to the G-protein coupled receptor 1 family. Homodimer and heterodimer. Heterodimerizes with CXCR5; leading to modulate the interaction between of CXCL13 and CXCR5.

Its subcellular location is the cell membrane. In terms of biological role, G-protein coupled receptor expressed in lymphocytes that acts as a chemotactic receptor for B-cells, T-cells, splenic dendritic cells, monocytes/macrophages and astrocytes. Receptor for oxysterol 7-alpha,25-dihydroxycholesterol (7-alpha,25-OHC) and other related oxysterols. Mediates cell positioning and movement of a number of cells by binding the 7-alpha,25-OHC ligand that forms a chemotactic gradient. Binding of 7-alpha,25-OHC mediates the correct localization of B-cells during humoral immune responses. Guides B-cell movement along the B-cell zone-T-cell zone boundary and later to interfollicular and outer follicular regions. Its specific expression during B-cell maturation helps position B-cells appropriately for mounting T-dependent antibody responses. Collaborates with CXCR5 to mediate B-cell migration; probably by forming a heterodimer with CXCR5 that affects the interaction between of CXCL13 and CXCR5. Also acts as a chemotactic receptor for some T-cells upon binding to 7-alpha,25-OHC ligand. Promotes follicular helper T (Tfh) cells differentiation by positioning activated T-cells at the follicle-T-zone interface, promoting contact of newly activated CD4 T-cells with activated dendritic cells and exposing them to Tfh-cell-promoting inducible costimulator (ICOS) ligand. Expression in splenic dendritic cells is required for their homeostasis, localization and ability to induce B- and T-cell responses: GPR183 acts as a chemotactic receptor in dendritic cells that mediates the accumulation of CD4(+) dendritic cells in bridging channels. Regulates migration of astrocytes and is involved in communication between astrocytes and macrophages. Promotes osteoclast precursor migration to bone surfaces. Signals constitutively through G(i)-alpha, but not G(s)-alpha or G(q)-alpha. Signals constitutively also via MAPK1/3 (ERK1/2). This Bos taurus (Bovine) protein is G-protein coupled receptor 183 (GPR183).